We begin with the raw amino-acid sequence, 299 residues long: MLRRGFIKQPPFVKIFKIVSPESTNAKATHCEVEFPLKVQELWRDKHHVIFNKPPLALSQLPDKRTWYNTHDYDPPVLLDIVQSSSGSILKDGTYEPSYYPIHRIDTPVSGGIVYAVNKQSAQQFSRNLRYGGNKGFSLTRKYVAKVGKSKTANECKEGLIKWNGAITYFQRVDNEHLILQLVTGKKHQIRKLTQQVLDSPIYNDLKYGGKKVFDSDFQIALHSAYIRTKIGFNIHEQIIPVPDGFRMIWGESVDQNGNFNEDITRVLKEDWAGTIKECLKKLKIQETKLADNQLIFVS.

The active site involves aspartate 106.

The protein belongs to the pseudouridine synthase RluA family.

Its subcellular location is the mitochondrion. The catalysed reaction is uridine(2819) in 21S rRNA = pseudouridine(2819) in 21S rRNA. Functionally, pseudouridylate synthase responsible for the pseudouridine-2819 formation in mitochondrial 21S rRNA. May modulate the efficiency or the fidelity of the mitochondrial translation machinery. This is 21S rRNA pseudouridine(2819) synthase (PUS5) from Kluyveromyces lactis (strain ATCC 8585 / CBS 2359 / DSM 70799 / NBRC 1267 / NRRL Y-1140 / WM37) (Yeast).